The chain runs to 322 residues: SUMO-activating enzyme subunit 1A (322 aa).

N-acetylmethionine is present on Met-1.

It belongs to the ubiquitin-activating E1 family. As to quaternary structure, heterodimer of SAE1A or SAE1B and SAE2. The complex binds SUMO proteins via SAE2.

It is found in the nucleus. Its pathway is protein modification; protein sumoylation. The dimeric enzyme acts as an E1 ligase for SUMO1 and SUMO2. It mediates ATP-dependent activation of SUMO proteins and formation of a thioester with a conserved cysteine residue on SAE2. Functionally redundant with its paralog SAE1B. In Arabidopsis thaliana (Mouse-ear cress), this protein is SUMO-activating enzyme subunit 1A (SAE1A).